Here is a 228-residue protein sequence, read N- to C-terminus: Glutamate transport system permease protein GluC (228 aa).

The next 4 helical transmembrane spans lie at 16–36, 64–84, 100–120, and 195–215; these read FWVT…LGTI, LTLV…LTLA, AVLG…RSGI, and LFVV…PMGL. The ABC transmembrane type-1 domain maps to 16-217; sequence FWVTIQLTVY…ILTLPMGLGL (202 aa).

This sequence belongs to the binding-protein-dependent transport system permease family. HisMQ subfamily. As to quaternary structure, the complex is composed of two ATP-binding proteins (GluA), two transmembrane proteins (GluC and GluD) and a solute-binding protein (GluB).

The protein resides in the cell membrane. Part of the ABC transporter complex GluABCD involved in glutamate uptake. Probably responsible for the translocation of the substrate across the membrane. This is Glutamate transport system permease protein GluC from Corynebacterium efficiens (strain DSM 44549 / YS-314 / AJ 12310 / JCM 11189 / NBRC 100395).